Reading from the N-terminus, the 283-residue chain is Phospholipase C (283 aa).

An N-terminal signal peptide occupies residues 1 to 24 (MKKKVLALAAAITVVAPLQSVAFA). A propeptide spanning residues 25–38 (HENDGGSKIKIVHR) is cleaved from the precursor. The Zn(2+) site is built by Trp-39, His-52, Asp-93, His-107, His-156, Asp-160, His-166, His-180, and Glu-184. In terms of domain architecture, Zn-dependent PLC spans 39 to 283 (WSAEDKHKEG…QLWFDTYGDR (245 aa)).

The protein belongs to the bacterial zinc-metallophospholipase C family. In terms of assembly, monomer. Zn(2+) is required as a cofactor.

It carries out the reaction a 1,2-diacyl-sn-glycero-3-phosphocholine + H2O = phosphocholine + a 1,2-diacyl-sn-glycerol + H(+). Required, with sphingomyelinase, to effect target cell lysis (hemolysis). This is Phospholipase C (plc) from Bacillus cereus.